A 252-amino-acid chain; its full sequence is Trans-aconitate 2-methyltransferase (252 aa).

The protein belongs to the methyltransferase superfamily. Tam family.

It localises to the cytoplasm. It catalyses the reaction trans-aconitate + S-adenosyl-L-methionine = (E)-3-(methoxycarbonyl)pent-2-enedioate + S-adenosyl-L-homocysteine. In terms of biological role, catalyzes the S-adenosylmethionine monomethyl esterification of trans-aconitate. This Escherichia coli O17:K52:H18 (strain UMN026 / ExPEC) protein is Trans-aconitate 2-methyltransferase.